The primary structure comprises 475 residues: AP-1 complex subunit mu-1-I (475 aa).

One can recognise an MHD domain in the interval 175–473; that stretch reads KNEAFLDIVE…TQSGDDYTIR (299 aa). Residues 240 to 262 are disordered; it reads ASATTSDNNTETDKKPSITSSSA.

This sequence belongs to the adaptor complexes medium subunit family. As to quaternary structure, adaptor protein complex 1 (AP-1) is a heterotetramer composed of two large adaptins (gamma-type subunit APL4 and beta-type subunit APL2), a medium adaptin (mu-type subunit APM1) and a small adaptin (sigma-type subunit APS1). AP-1 interacts with clathrin.

It localises to the cytoplasmic vesicle. Its subcellular location is the clathrin-coated vesicle membrane. The protein localises to the membrane. It is found in the clathrin-coated pit. In terms of biological role, component of the adaptor complexes which link clathrin to receptors in coated vesicles. Clathrin-associated protein complexes are believed to interact with the cytoplasmic tails of membrane proteins, leading to their selection and concentration. The AP-1 complex interacts directly with clathrin. AP57 is probably a subunit of the Golgi membrane adaptor. The protein is AP-1 complex subunit mu-1-I (APM1) of Saccharomyces cerevisiae (strain ATCC 204508 / S288c) (Baker's yeast).